Consider the following 419-residue polypeptide: Tyrosine--tRNA ligase (419 aa).

Tyrosine 34 provides a ligand contact to L-tyrosine. The short motif at 39-48 is the 'HIGH' region element; the sequence is PTADSLHLGN. L-tyrosine-binding residues include tyrosine 169 and glutamine 173. The 'KMSKS' region signature appears at 229–233; sequence KFGKS. Lysine 232 contributes to the ATP binding site. Positions 353–419 constitute an S4 RNA-binding domain; it reads LTLIELLISV…GKKKNFVLTY (67 aa).

This sequence belongs to the class-I aminoacyl-tRNA synthetase family. TyrS type 1 subfamily. Homodimer.

It is found in the cytoplasm. The catalysed reaction is tRNA(Tyr) + L-tyrosine + ATP = L-tyrosyl-tRNA(Tyr) + AMP + diphosphate + H(+). Functionally, catalyzes the attachment of tyrosine to tRNA(Tyr) in a two-step reaction: tyrosine is first activated by ATP to form Tyr-AMP and then transferred to the acceptor end of tRNA(Tyr). The chain is Tyrosine--tRNA ligase from Lactococcus lactis subsp. cremoris (strain MG1363).